Here is a 147-residue protein sequence, read N- to C-terminus: Protein-export protein SecB 2 (147 aa).

It belongs to the SecB family. As to quaternary structure, homotetramer, a dimer of dimers. One homotetramer interacts with 1 SecA dimer.

The protein resides in the cytoplasm. In terms of biological role, one of the proteins required for the normal export of preproteins out of the cell cytoplasm. It is a molecular chaperone that binds to a subset of precursor proteins, maintaining them in a translocation-competent state. It also specifically binds to its receptor SecA. The chain is Protein-export protein SecB 2 from Francisella tularensis subsp. holarctica (strain FTNF002-00 / FTA).